The sequence spans 631 residues: Pescadillo homolog (631 aa).

In terms of domain architecture, BRCT spans 321–414 (RLRTLFKGLK…QLLPTNDYFL (94 aa)). The segment covering 428–442 (SKRDSYIPPEEKALH) has biased composition (basic and acidic residues). Disordered regions lie at residues 428–471 (SKRD…EADQ) and 489–560 (YKKY…EVDE). Residues Ser453 and Ser457 each carry the phosphoserine modification. Acidic residues-rich tracts occupy residues 453–471 (SEEE…EADQ) and 498–525 (VNED…EDVD). Residues 526–538 (EQTKRKQQEKEKM) show a composition bias toward basic and acidic residues. The segment covering 544–553 (KVHKVNKRQV) has biased composition (basic residues). A coiled-coil region spans residues 593–629 (LRKKRRNIDADTKEAKKAAKREARKLAAEAAARAAKL).

It belongs to the pescadillo family.

Its subcellular location is the nucleus. It localises to the nucleolus. The protein resides in the nucleoplasm. In terms of biological role, required for maturation of ribosomal RNAs and formation of the large ribosomal subunit. The polypeptide is Pescadillo homolog (Drosophila persimilis (Fruit fly)).